Here is a 284-residue protein sequence, read N- to C-terminus: RNase adapter protein RapZ (284 aa).

8 to 15 (GRSGSGKS) provides a ligand contact to ATP. 56–59 (DVRN) provides a ligand contact to GTP. The tract at residues 266–284 (RSRGKNVQSRHRTLEKRKS) is RNA-binding.

It belongs to the RapZ-like family. RapZ subfamily. In terms of assembly, homotrimer.

Its function is as follows. Modulates the synthesis of GlmS, by affecting the processing and stability of the regulatory small RNA GlmZ. When glucosamine-6-phosphate (GlcN6P) concentrations are high in the cell, RapZ binds GlmZ and targets it to cleavage by RNase E. Consequently, GlmZ is inactivated and unable to activate GlmS synthesis. Under low GlcN6P concentrations, RapZ is sequestered and inactivated by an other regulatory small RNA, GlmY, preventing GlmZ degradation and leading to synthesis of GlmS. This chain is RNase adapter protein RapZ, found in Klebsiella pneumoniae (strain 342).